We begin with the raw amino-acid sequence, 162 residues long: SsrA-binding protein (162 aa).

The disordered stretch occupies residues D140–G162.

It belongs to the SmpB family.

Its subcellular location is the cytoplasm. Functionally, required for rescue of stalled ribosomes mediated by trans-translation. Binds to transfer-messenger RNA (tmRNA), required for stable association of tmRNA with ribosomes. tmRNA and SmpB together mimic tRNA shape, replacing the anticodon stem-loop with SmpB. tmRNA is encoded by the ssrA gene; the 2 termini fold to resemble tRNA(Ala) and it encodes a 'tag peptide', a short internal open reading frame. During trans-translation Ala-aminoacylated tmRNA acts like a tRNA, entering the A-site of stalled ribosomes, displacing the stalled mRNA. The ribosome then switches to translate the ORF on the tmRNA; the nascent peptide is terminated with the 'tag peptide' encoded by the tmRNA and targeted for degradation. The ribosome is freed to recommence translation, which seems to be the essential function of trans-translation. This chain is SsrA-binding protein, found in Roseobacter denitrificans (strain ATCC 33942 / OCh 114) (Erythrobacter sp. (strain OCh 114)).